Reading from the N-terminus, the 275-residue chain is Large ribosomal subunit protein uL2 (275 aa).

Disordered stretches follow at residues 1–55 and 218–275; these read MGIR…RHRG and PHVR…RRRR. Residues 259–275 show a composition bias toward basic residues; the sequence is TRNKKKASSRLIVRRRR.

This sequence belongs to the universal ribosomal protein uL2 family. In terms of assembly, part of the 50S ribosomal subunit. Forms a bridge to the 30S subunit in the 70S ribosome.

Its function is as follows. One of the primary rRNA binding proteins. Required for association of the 30S and 50S subunits to form the 70S ribosome, for tRNA binding and peptide bond formation. It has been suggested to have peptidyltransferase activity; this is somewhat controversial. Makes several contacts with the 16S rRNA in the 70S ribosome. This Crocosphaera subtropica (strain ATCC 51142 / BH68) (Cyanothece sp. (strain ATCC 51142)) protein is Large ribosomal subunit protein uL2.